Reading from the N-terminus, the 208-residue chain is MKVTAAFAGLLATTLAAPATELVTRSINYVQNYNGNLGAFSYNEGAGTFSMYWQQGVSNDFVVGLGRSTGSSNPITYSASYSASGGSYLAVYGWVNSPQAEYHVVEAYGNYNPCSSGSATNLGTVSSDGGTYQVCTDTRVNQPSITGTSTFTQFFSVRQGSRTSGTVTIANHFNFWAKHGFGNSNFNYQVVAVEAWSGTGTASVTVSA.

The N-terminal stretch at 1–16 is a signal peptide; the sequence is MKVTAAFAGLLATTLA. A GH11 domain is found at 17–207; that stretch reads APATELVTRS…GTGTASVTVS (191 aa). The active-site Nucleophile is the glutamate 101. Residue glutamate 194 is the Proton donor of the active site.

It belongs to the glycosyl hydrolase 11 (cellulase G) family.

The protein localises to the secreted. It catalyses the reaction Endohydrolysis of (1-&gt;4)-beta-D-xylosidic linkages in xylans.. Its pathway is glycan degradation; xylan degradation. Its activity is regulated as follows. N-bromosuccinimide completely inhibits the catalytic activity. Endo-1,4-beta-xylanase involved in the hydrolysis of xylan, a major structural heterogeneous polysaccharide found in plant biomass representing the second most abundant polysaccharide in the biosphere, after cellulose. The chain is Endo-1,4-beta-xylanase B (xynB) from Talaromyces purpureogenus (Soft rot fungus).